Reading from the N-terminus, the 371-residue chain is Fe(3+) ions import ATP-binding protein FbpC (371 aa).

Residues isoleucine 5–isoleucine 235 enclose the ABC transporter domain. ATP is bound at residue glycine 37 to threonine 44.

Belongs to the ABC transporter superfamily. Fe(3+) ion importer (TC 3.A.1.10) family. The complex is composed of two ATP-binding proteins (FbpC), two transmembrane proteins (FbpB) and a solute-binding protein (FbpA).

The protein localises to the cell inner membrane. It catalyses the reaction Fe(3+)(out) + ATP + H2O = Fe(3+)(in) + ADP + phosphate + H(+). Functionally, part of the ABC transporter complex FbpABC involved in Fe(3+) ions import. Responsible for energy coupling to the transport system. This is Fe(3+) ions import ATP-binding protein FbpC from Fusobacterium nucleatum subsp. nucleatum (strain ATCC 25586 / DSM 15643 / BCRC 10681 / CIP 101130 / JCM 8532 / KCTC 2640 / LMG 13131 / VPI 4355).